The chain runs to 567 residues: Urease subunit alpha (567 aa).

The 439-residue stretch at 129–567 (GGIDAHIHFI…LPLAQRYFLF (439 aa)) folds into the Urease domain. Residues histidine 134, histidine 136, and lysine 217 each coordinate Ni(2+). Lysine 217 is modified (N6-carboxylysine). Histidine 219 is a binding site for substrate. Ni(2+)-binding residues include histidine 246 and histidine 272. Residue histidine 320 is the Proton donor of the active site. Aspartate 360 serves as a coordination point for Ni(2+).

The protein belongs to the metallo-dependent hydrolases superfamily. Urease alpha subunit family. In terms of assembly, heterotrimer of UreA (gamma), UreB (beta) and UreC (alpha) subunits. Three heterotrimers associate to form the active enzyme. The cofactor is Ni cation. Post-translationally, carboxylation allows a single lysine to coordinate two nickel ions.

The protein resides in the cytoplasm. The enzyme catalyses urea + 2 H2O + H(+) = hydrogencarbonate + 2 NH4(+). The protein operates within nitrogen metabolism; urea degradation; CO(2) and NH(3) from urea (urease route): step 1/1. The protein is Urease subunit alpha of Hahella chejuensis (strain KCTC 2396).